The sequence spans 611 residues: Dolabella-3,7-dien-18-ol synthase TPS06 (611 aa).

Positions 363, 367, 507, 511, and 515 each coordinate Mg(2+). The DDXXD motif; degenerate signature appears at 363-367 (DNTFD).

The protein belongs to the terpene synthase family. Tpsa subfamily. Requires Mg(2+) as cofactor. Mn(2+) is required as a cofactor. As to expression, predominantly expressed in flowers but also in stems, siliques, roots and leaves.

The protein localises to the cytoplasm. The catalysed reaction is (2E,6E,10E)-geranylgeranyl diphosphate + H2O = (3E,7E)-dolabella-3,7-dien-18-ol + diphosphate. The protein operates within secondary metabolite biosynthesis; terpenoid biosynthesis. Functionally, involved in terpene biosynthesis in roots. Possesses sesquiterpene (C15) synthase activity and diterpene (C20) synthase activity in vitro. Possesses dolabella-3,7-dien-18-ol synthase activity in vitro. Catalyzes the formation of dolabella-3,7-dien-18-ol from geranylgeranyl diphosphate. This chain is Dolabella-3,7-dien-18-ol synthase TPS06, found in Arabidopsis thaliana (Mouse-ear cress).